The sequence spans 523 residues: Nuclear receptor ROR-alpha (523 aa).

Positions methionine 1–serine 26 are enriched in low complexity. Residues methionine 1–threonine 63 are disordered. Lysine 38 is subject to N6-methyllysine. NR C4-type zinc fingers lie at residues cysteine 73–cysteine 93 and cysteine 109–cysteine 133. Positions cysteine 73 to methionine 138 form a DNA-binding region, nuclear receptor. The interval aspartate 154–threonine 183 is disordered. The residue at position 183 (threonine 183) is a Phosphothreonine; by MAPK1. Residue lysine 240 forms a Glycyl lysine isopeptide (Lys-Gly) (interchain with G-Cter in SUMO) linkage. An NR LBD domain is found at glutamate 272–leucine 510. An AF-2 motif is present at residues leucine 506–phenylalanine 511.

Belongs to the nuclear hormone receptor family. NR1 subfamily. In terms of assembly, monomer. Interacts (via the DNA-binding domain) with HIF1A; the interaction enhances HIF1A transcription under hypoxia through increasing protein stability. Interacts with CEBPB; the interaction disrupts the interaction CEBPB:EP300. Interacts with the coactivators NCOA2, PPARGC1A (via LXXLL motif), EP300 and MED1. Interacts with the corepressor NCOR1. Interacts with MAGED1 and CTNNB1. Interacts with CRY1 and PER2. Interacts (via AF-2 motif) with PROX1. Interacts with NRIP1. Isoform 4 interacts (via AF-2 motif) with isoform 1 of FOXP3 (via LXXLL motif). Post-translationally, phosphorylation by conventional PKCs in neurons inhibits transcriptional activity. Phosphorylated on Thr-183 by MAPK1/ERK1 in vitro. Sumoylated by SENP1 and SENP2. Sumoylation, promoted by PIAS2, PIAS3, PIAS4 but not PIAS1, enhances the transcriptional activity. Desumoylated by SENP1. In terms of processing, ubiquitinated, leading to its degradation by the proteasome. Proteasomal degradation is required for efficient transcriptional activity and is prevented by HR. Post-translationally, monomethylated at Lys-38 by EZH2, this creates a degron recognized by a DCX (DDB1-DCAF1/VPRBP-CUL4A-RBX1) E3 ubiquitin ligase complex. In terms of tissue distribution, expressed in cerebellum, heart, liver, lung, kidney, retina and brown and white adipose tissues. Expressed in the subset of mature Th17 cells.

Its subcellular location is the nucleus. Its function is as follows. Nuclear receptor that binds DNA as a monomer to ROR response elements (RORE) containing a single core motif half-site 5'-AGGTCA-3' preceded by a short A-T-rich sequence. Key regulator of embryonic development, cellular differentiation, immunity, circadian rhythm as well as lipid, steroid, xenobiotics and glucose metabolism. Considered to have intrinsic transcriptional activity, have some natural ligands like oxysterols that act as agonists (25-hydroxycholesterol) or inverse agonists (7-oxygenated sterols), enhancing or repressing the transcriptional activity, respectively. Recruits distinct combinations of cofactors to target genes regulatory regions to modulate their transcriptional expression, depending on the tissue, time and promoter contexts. Regulates genes involved in photoreceptor development including OPN1SW, OPN1SM and ARR3 and skeletal muscle development with MYOD1. Required for proper cerebellum development, regulates SHH gene expression, among others, to induce granule cells proliferation as well as expression of genes involved in calcium-mediated signal transduction. Regulates the circadian expression of several clock genes, including CLOCK, BMAL1, NPAS2 and CRY1. Competes with NR1D1 for binding to their shared DNA response element on some clock genes such as BMAL1, CRY1 and NR1D1 itself, resulting in NR1D1-mediated repression or RORA-mediated activation of clock genes expression, leading to the circadian pattern of clock genes expression. Therefore influences the period length and stability of the clock. Regulates genes involved in lipid metabolism such as apolipoproteins APOA1, APOA5, APOC3 and PPARG. In liver, has specific and redundant functions with RORC as positive or negative modulator of expression of genes encoding phase I and phase II proteins involved in the metabolism of lipids, steroids and xenobiotics, such as CYP7B1 and SULT2A1. Induces a rhythmic expression of some of these genes. In addition, interplays functionally with NR1H2 and NR1H3 for the regulation of genes involved in cholesterol metabolism. Also involved in the regulation of hepatic glucose metabolism through the modulation of G6PC1 and PCK1. In adipose tissue, plays a role as negative regulator of adipocyte differentiation, probably acting through dual mechanisms. May suppress CEBPB-dependent adipogenesis through direct interaction and PPARG-dependent adipogenesis through competition for DNA-binding. Downstream of IL6 and TGFB and synergistically with RORC isoform 2, is implicated in the lineage specification of uncommitted CD4(+) T-helper (T(H)) cells into T(H)17 cells, antagonizing the T(H)1 program. Probably regulates IL17 and IL17F expression on T(H) by binding to the essential enhancer conserved non-coding sequence 2 (CNS2) in the IL17-IL17F locus. Involved in hypoxia signaling by interacting with and activating the transcriptional activity of HIF1A. May inhibit cell growth in response to cellular stress. May exert an anti-inflammatory role by inducing CHUK expression and inhibiting NF-kappa-B signaling. This is Nuclear receptor ROR-alpha (Rora) from Mus musculus (Mouse).